The following is a 149-amino-acid chain: MKRQSDPKKGALTGPSQRQLRAGELIRHALVEILREEELQDEALQNISVTVSEVRMSPDLKHAICFVEPLGAGLTGQDTTDIIKGLNRVSKFLRGRLGRSIDMKFTPDLKFIHDESFGTAAYMDKLFLDPRVQQDTRRLSDVVDDEDEA.

Belongs to the RbfA family. Monomer. Binds 30S ribosomal subunits, but not 50S ribosomal subunits or 70S ribosomes.

It is found in the cytoplasm. Its function is as follows. One of several proteins that assist in the late maturation steps of the functional core of the 30S ribosomal subunit. Associates with free 30S ribosomal subunits (but not with 30S subunits that are part of 70S ribosomes or polysomes). Required for efficient processing of 16S rRNA. May interact with the 5'-terminal helix region of 16S rRNA. The sequence is that of Ribosome-binding factor A from Caulobacter vibrioides (strain ATCC 19089 / CIP 103742 / CB 15) (Caulobacter crescentus).